The chain runs to 263 residues: Hatching enzyme 1.2 (263 aa).

A signal peptide spans 1 to 19 (MDIRASLSILLLLFGLSQA). The propeptide at 20–64 (SPLREFEAIFVSEPETVDITTQILETNKGSSEVLFEGDVVLPKNR) is activation peptide. One can recognise a Peptidase M12A domain in the interval 65–263 (NALICEDKSC…ILRINKLYGC (199 aa)). Cystine bridges form between cysteine 69–cysteine 74, cysteine 114–cysteine 263, and cysteine 135–cysteine 155. Histidine 163 provides a ligand contact to Zn(2+). Glutamate 164 is a catalytic residue. 2 residues coordinate Zn(2+): histidine 167 and histidine 173.

It depends on Zn(2+) as a cofactor. In terms of tissue distribution, expressed in cells of the hatching gland.

It is found in the secreted. The catalysed reaction is Hydrolysis of the inner layer of fish egg envelope. Also hydrolysis of casein and small molecule substrates such as succinyl-Leu-Leu-Val-Tyr-|-7-(4-methyl)coumarylamide.. Its function is as follows. Metalloendopeptidase which participates in the breakdown of the egg envelope at the time of hatching. Cleaves the N-terminal regions of the zona pellucia glycoproteins ZP2 and ZP3, where it specifically recognizes the peptide sequences TVQQS-|-DYLIK (major site) and KLMLK-|-APEPF (minor site). The protein is Hatching enzyme 1.2 of Danio rerio (Zebrafish).